We begin with the raw amino-acid sequence, 366 residues long: Growth hormone secretagogue receptor type 1 (366 aa).

Residues 1-40 lie on the Extracellular side of the membrane; it reads MWNATLSEEPGYNLTLPDLGWDAPADNDSLTDELLPLFPA. Residues asparagine 3, asparagine 13, and asparagine 27 are each glycosylated (N-linked (GlcNAc...) asparagine). A helical transmembrane segment spans residues 41 to 66; the sequence is PLLAGVTATCVALFVVGIAGNLLTML. At 67–72 the chain is on the cytoplasmic side; it reads VVSRFR. The chain crosses the membrane as a helical span at residues 73–96; the sequence is ELRTTTNLYLSSMAFSDLLIFLCM. Topologically, residues 97–117 are extracellular; it reads PLDLVRLWQYRPWNFGDLLCK. A disulfide bridge connects residues cysteine 116 and cysteine 198. Residues 118 to 139 traverse the membrane as a helical segment; sequence LFQFVSESCTYATVLTITALSV. The Cytoplasmic portion of the chain corresponds to 140 to 162; the sequence is ERYFAICFPLRAKVVVTKGRVKL. The chain crosses the membrane as a helical span at residues 163-183; sequence VILVIWAVAFCSAGPIFVLVG. At 184–211 the chain is on the extracellular side; the sequence is VEHENGTDPRDTNECRATEFAVRSGLLT. Asparagine 188 is a glycosylation site (N-linked (GlcNAc...) asparagine). The chain crosses the membrane as a helical span at residues 212-235; that stretch reads VMVWVSSVFFFLPVFCLTVLYSLI. Over 236–263 the chain is Cytoplasmic; it reads GRKLWRRKRGEAAVGASLRDQNHKQTVK. The chain crosses the membrane as a helical span at residues 264-285; it reads MLAVVVFAFILCWLPFHVGRYL. Residues 286–302 are Extracellular-facing; the sequence is FSKSFEPGSLEIAQISQ. The chain crosses the membrane as a helical span at residues 303 to 326; it reads YCNLVSFVLFYLSAAINPILYNIM. The Cytoplasmic segment spans residues 327-366; it reads SKKYRVAVFKLLGFEPFSQRKLSTLKDESSRAWTETSINT.

It belongs to the G-protein coupled receptor 1 family.

It is found in the cell membrane. Functionally, receptor for ghrelin, coupled to G-alpha-11 proteins. Stimulates growth hormone secretion. Also binds other growth hormone releasing peptides (GHRP) (e.g. Met-enkephalin and GHRP-6) as well as non-peptide, low molecular weight secretagogues (e.g. L-692,429, MK-0677, adenosine). In Mustela putorius furo (European domestic ferret), this protein is Growth hormone secretagogue receptor type 1 (GHSR).